Here is an 892-residue protein sequence, read N- to C-terminus: Putative GTP diphosphokinase RSH1, chloroplastic (892 aa).

Residues 1 to 52 (MQPPTGAVSGSSSSSLECVSSCRTSWRGGGRPYECSVLSCAWNAPRALTGAL) constitute a chloroplast transit peptide. An HD domain is found at 184 to 291 (FIIHPVEVAR…VKLADRLHNM (108 aa)). One can recognise a TGS domain in the interval 574-637 (LGSRVFVFTP…ANAEVVEIII (64 aa)). The 72-residue stretch at 809-880 (WLCIVCVDRK…MILGVLGWSV (72 aa)) folds into the ACT domain.

The protein belongs to the RelA/SpoT family.

Its subcellular location is the plastid. The protein resides in the chloroplast. The catalysed reaction is GTP + ATP = guanosine 3'-diphosphate 5'-triphosphate + AMP. In terms of biological role, may be involved in a rapid plant ppGpp (guanosine 3'-diphosphate 5'-diphosphate)-mediated response to pathogens and other stresses. The protein is Putative GTP diphosphokinase RSH1, chloroplastic (RSH1) of Oryza sativa subsp. japonica (Rice).